The primary structure comprises 473 residues: JmjC domain-containing protein 4 (473 aa).

The region spanning 140–433 (PTDGLLTDFS…DFDHPYLDRN (294 aa)) is the JmjC domain. Residues 452-473 (TNKKNEKRPAEDDSPSQKKTCQ) form a disordered region.

It is found in the nucleus. Functionally, has a role in meiosis. In Schizosaccharomyces pombe (strain 972 / ATCC 24843) (Fission yeast), this protein is JmjC domain-containing protein 4 (jmj4).